A 370-amino-acid polypeptide reads, in one-letter code: MAPPSRRECPSPSWRFPGLLLAALVLLRSSCSDACGPPPTFEAMELTSRPKPYYKVGERVEYDCKKGYHHFAPFLTHSICDRNHTWLPISDEPCVRKVCHYIPNPLHGEAILANGSYSFGNQLHFICNDGYYLIGKEILYCELKGSDAVWSGRPPICQKILCKPPPKINNGKHTFSDVDVFEYLDAVTYSCDPAPGPDPFSLIGESTIYCRDNSVWSGDAPECKVVKCRFPVIENGKQIAGFGKKFYYKATVIFECDEGFHIIGSDTIVCNSNSTWDPPVPKCVKVSTSPATVSPTSSVPGYPNPDEGMLNSLDEWAIALIVIAILVGVAIISFGLHRYLQRRKKKGKADGTAEYATYQSKSATLAEQRS.

An N-terminal signal peptide occupies residues 1 to 32; it reads MAPPSRRECPSPSWRFPGLLLAALVLLRSSCS. 4 Sushi domains span residues 33–96, 97–159, 160–225, and 226–285; these read DACG…PCVR, KVCH…ICQK, ILCK…ECKV, and VKCR…KCVK. The Extracellular portion of the chain corresponds to 33–315; sequence DACGPPPTFE…DEGMLNSLDE (283 aa). 8 cysteine pairs are disulfide-bonded: C35–C80, C64–C94, C99–C141, C127–C157, C162–C210, C191–C223, C228–C270, and C256–C283. N-linked (GlcNAc...) asparagine glycosylation occurs at N114. O-linked (GalNAc...) serine glycosylation is present at S287. The O-linked (GalNAc...) threonine glycan is linked to T288. A glycan (O-linked (GalNAc...) serine) is linked at S289. T292 carries O-linked (GalNAc...) threonine glycosylation. A glycan (O-linked (GalNAc...) serine) is linked at S294. O-linked (GalNAc...) threonine glycosylation occurs at T296. Residues 316–336 form a helical membrane-spanning segment; sequence WAIALIVIAILVGVAIISFGL. At 337 to 370 the chain is on the cytoplasmic side; that stretch reads HRYLQRRKKKGKADGTAEYATYQSKSATLAEQRS.

Interacts with C3b. Interacts with C4b. Interacts with moesin/MSN. Post-translationally, O-glycosylated.

It is found in the cytoplasmic vesicle. The protein resides in the secretory vesicle. It localises to the acrosome inner membrane. Acts as a cofactor for complement factor I, a serine protease which protects autologous cells against complement-mediated injury by cleaving C3b and C4b deposited on host tissue. May be involved in the fusion of the spermatozoa with the oocyte during fertilization. Also acts as a costimulatory factor for T-cells which induces the differentiation of CD4+ into T-regulatory 1 cells. T-regulatory 1 cells suppress immune responses by secreting interleukin-10, and therefore are thought to prevent autoimmunity. The chain is Membrane cofactor protein (CD46) from Saguinus oedipus (Cotton-top tamarin).